A 382-amino-acid polypeptide reads, in one-letter code: ATP phosphoribosyltransferase regulatory subunit (382 aa).

This sequence belongs to the class-II aminoacyl-tRNA synthetase family. HisZ subfamily. Heteromultimer composed of HisG and HisZ subunits.

It is found in the cytoplasm. The protein operates within amino-acid biosynthesis; L-histidine biosynthesis; L-histidine from 5-phospho-alpha-D-ribose 1-diphosphate: step 1/9. Its function is as follows. Required for the first step of histidine biosynthesis. May allow the feedback regulation of ATP phosphoribosyltransferase activity by histidine. The chain is ATP phosphoribosyltransferase regulatory subunit from Burkholderia pseudomallei (strain K96243).